The chain runs to 164 residues: PTS system sorbose-specific EIIB component (164 aa).

The 164-residue stretch at 1–164 (MIITLARVDD…AKIDEVFGKE (164 aa)) folds into the PTS EIIB type-4 domain. H14 functions as the Pros-phosphohistidine intermediate in the catalytic mechanism. The residue at position 14 (H14) is a Phosphohistidine; by EIIA.

Its subcellular location is the cytoplasm. It carries out the reaction keto-L-sorbose(out) + N(pros)-phospho-L-histidyl-[protein] = L-sorbose 1-phosphate(in) + L-histidyl-[protein]. Its function is as follows. The phosphoenolpyruvate-dependent sugar phosphotransferase system (PTS), a major carbohydrate active transport system, catalyzes the phosphorylation of incoming sugar substrates concomitant with their translocation across the cell membrane. The enzyme II SorABCD PTS system is involved in L-sorbose transport. This Lacticaseibacillus casei (Lactobacillus casei) protein is PTS system sorbose-specific EIIB component.